A 536-amino-acid chain; its full sequence is Phosphoenolpyruvate carboxykinase (ATP) (536 aa).

3 residues coordinate substrate: Arg61, Tyr195, and Lys201. Residues Lys201, His220, and 236-244 (GLSGTGKTT) each bind ATP. Positions 201 and 220 each coordinate Mn(2+). Asp257 is a binding site for Mn(2+). The ATP site is built by Glu285, Arg322, and Thr447. Arg322 provides a ligand contact to substrate.

This sequence belongs to the phosphoenolpyruvate carboxykinase (ATP) family. The cofactor is Mn(2+).

It is found in the cytoplasm. The enzyme catalyses oxaloacetate + ATP = phosphoenolpyruvate + ADP + CO2. Its pathway is carbohydrate biosynthesis; gluconeogenesis. Involved in the gluconeogenesis. Catalyzes the conversion of oxaloacetate (OAA) to phosphoenolpyruvate (PEP) through direct phosphoryl transfer between the nucleoside triphosphate and OAA. This chain is Phosphoenolpyruvate carboxykinase (ATP), found in Rhizobium meliloti (strain 1021) (Ensifer meliloti).